The primary structure comprises 172 residues: AIG2-like protein B (172 aa).

A substrate-binding site is contributed by 15-20 (YGSFQE). Glu-83 functions as the Proton acceptor in the catalytic mechanism. Positions 146 to 165 (KRNPQGKGRDDFSNVLKEED) are enriched in basic and acidic residues. Residues 146-172 (KRNPQGKGRDDFSNVLKEEDPANAPSS) form a disordered region.

The protein belongs to the gamma-glutamylcyclotransferase family. In terms of tissue distribution, expressed in flowerss, leaves, stems, seeds and roots.

The protein resides in the cell membrane. Putative gamma-glutamylcyclotransferase. This chain is AIG2-like protein B, found in Arabidopsis thaliana (Mouse-ear cress).